The following is a 151-amino-acid chain: Large-conductance mechanosensitive channel (151 aa).

The next 2 membrane-spanning stretches (helical) occupy residues 12–32 and 71–91; these read GNIV…ALVT and VLLS…FLVV. The tract at residues 125-151 is disordered; sequence NSNSSGRHEAPGTAGTPPPNYGPRADT.

This sequence belongs to the MscL family. Homopentamer.

The protein localises to the cell membrane. Its function is as follows. Channel that opens in response to stretch forces in the membrane lipid bilayer. May participate in the regulation of osmotic pressure changes within the cell. This chain is Large-conductance mechanosensitive channel, found in Mycobacterium ulcerans (strain Agy99).